The chain runs to 230 residues: MKIIWLGHGSFRIESGEAVLLVDPWLNGNPTLPEDQHDAAVIGATHILLTHTHFDHVVDVLPLARLLKVPVVGQYDLMGYWSEAEEIETVGFNKGGTVTLNGVRVSMVPASHSSTFTTPDGLRSGGSEVGYMIAAEGHVVYLSGDTGIMADMDWMGDYYKPDIGILSAGGHFTMDMQGAAYAAKRYFNFKTVIPCHYRSFPILEQSAQALIDGLPGVEVIEPQVMQAIEV.

The protein belongs to the UPF0173 family.

The chain is UPF0173 metal-dependent hydrolase SPO2976 from Ruegeria pomeroyi (strain ATCC 700808 / DSM 15171 / DSS-3) (Silicibacter pomeroyi).